Here is a 61-residue protein sequence, read N- to C-terminus: Metallothionein-1 (61 aa).

M1 carries the post-translational modification N-acetylmethionine. Residues 1-29 are beta; the sequence is MDPNCSCSTGGSCTCSSSCGCKNCKCTSC. A divalent metal cation is bound by residues C5, C7, C13, C15, C19, C21, C24, C26, C29, C33, C34, C36, C37, C41, C44, C48, C50, C57, C59, and C60. Positions 30 to 61 are alpha; it reads KKSCCSCCPVGCSKCAQGCVCKGASDKCTCCA.

The protein belongs to the metallothionein superfamily. Type 1 family.

Its function is as follows. Metallothioneins have a high content of cysteine residues that bind various heavy metals; these proteins are transcriptionally regulated by both heavy metals and glucocorticoids. This is Metallothionein-1 (Mt1) from Rattus norvegicus (Rat).